The primary structure comprises 128 residues: Nanos homolog 1 (128 aa).

The segment at 7 to 23 is essential for its translational repressor activity; sequence FDSWSDYLGLSSLISRG. Residues 23–56 form a disordered region; it reads GLQPRGEGENPSPRWNVSCPAPAEPLPSKEPEGR. The segment at 60–114 adopts a Nanos-type zinc-finger fold; the sequence is GCGFCRSNKEAMSLYSSHRLRSLDGRVLCPVLRGYTCPLCGANGDWAHTMRYCPL. The Zn(2+) site is built by cysteine 61, cysteine 64, histidine 77, cysteine 88, cysteine 96, cysteine 99, histidine 107, and cysteine 112. 2 short sequence motifs (C2HC) span residues 61 to 88 and 96 to 112; these read CGFC…RVLC and CPLC…MRYC.

It belongs to the nanos family. Interacts with ccnb1.

Its subcellular location is the cytoplasm. The protein localises to the perinuclear region. Acts as a translational repressor. Can mediate repression affecting different steps in the translation process: cap-driven, IRES-driven, polyadenylated RNAs or nonpolyadenylated RNAs. Essential for the development of primordial germ cells (PGCs) by ensuring their proper migration and survival. This Xenopus borealis (Kenyan clawed frog) protein is Nanos homolog 1 (nanos1).